A 128-amino-acid chain; its full sequence is Nanos homolog 1 (128 aa).

Residues 7-23 (FDSWSDYLGLSSLISRG) form an essential for its translational repressor activity region. The disordered stretch occupies residues 23–56 (GLQPRGEGENPSPRWNVSCPAPAEPLPSKEPEGR). A Nanos-type zinc finger spans residues 60–114 (GCGFCRSNKEAMSLYSSHRLRSLDGRVLCPVLRGYTCPLCGANGDWAHTMRYCPL). Zn(2+) contacts are provided by C61, C64, H77, C88, C96, C99, H107, and C112. Short sequence motifs (C2HC) lie at residues 61–88 (CGFC…RVLC) and 96–112 (CPLC…MRYC).

Belongs to the nanos family. In terms of assembly, interacts with ccnb1.

The protein resides in the cytoplasm. The protein localises to the perinuclear region. Functionally, acts as a translational repressor. Can mediate repression affecting different steps in the translation process: cap-driven, IRES-driven, polyadenylated RNAs or nonpolyadenylated RNAs. Essential for the development of primordial germ cells (PGCs) by ensuring their proper migration and survival. In Xenopus borealis (Kenyan clawed frog), this protein is Nanos homolog 1 (nanos1).